Reading from the N-terminus, the 179-residue chain is Ribosome maturation factor RimP (179 aa).

The protein belongs to the RimP family.

Its subcellular location is the cytoplasm. Required for maturation of 30S ribosomal subunits. This is Ribosome maturation factor RimP from Prosthecochloris aestuarii (strain DSM 271 / SK 413).